Here is a 741-residue protein sequence, read N- to C-terminus: Photosystem I P700 chlorophyll a apoprotein A2 1 (741 aa).

8 helical membrane-spanning segments follow: residues 46–69, 135–158, 175–199, 273–291, 334–357, 373–399, 421–443, and 524–542; these read IFAT…FHVA, LYTG…LHLQ, LNHH…HVAI, IAHH…GHMY, LHFQ…QHMY, AALY…IFLV, AIIS…LYVH, and FLVH…LILV. Cys566 and Cys575 together coordinate [4Fe-4S] cluster. A run of 2 helical transmembrane segments spans residues 582-603 and 650-672; these read SFYL…YWHW and LSVW…MFLI. Positions 661, 669, and 677 each coordinate chlorophyll a. Trp678 provides a ligand contact to phylloquinone. Residues 714 to 734 traverse the membrane as a helical segment; the sequence is VVGLAHFTVGYVLTYAAFLIA.

It belongs to the PsaA/PsaB family. As to quaternary structure, the PsaA/B heterodimer binds the P700 chlorophyll special pair and subsequent electron acceptors. PSI consists of a core antenna complex that captures photons, and an electron transfer chain that converts photonic excitation into a charge separation. The cyanobacterial PSI reaction center is composed of one copy each of PsaA,B,C,D,E,F,I,J,K,L,M and X, and forms trimeric complexes. PSI electron transfer chain: 5 chlorophyll a, 1 chlorophyll a', 2 phylloquinones and 3 4Fe-4S clusters. PSI core antenna: 90 chlorophyll a, 22 carotenoids, 3 phospholipids and 1 galactolipid. P700 is a chlorophyll a/chlorophyll a' dimer, A0 is one or more chlorophyll a, A1 is one or both phylloquinones and FX is a shared 4Fe-4S iron-sulfur center. is required as a cofactor.

The protein localises to the cellular thylakoid membrane. It catalyses the reaction reduced [plastocyanin] + hnu + oxidized [2Fe-2S]-[ferredoxin] = oxidized [plastocyanin] + reduced [2Fe-2S]-[ferredoxin]. In terms of biological role, psaA and PsaB bind P700, the primary electron donor of photosystem I (PSI), as well as the electron acceptors A0, A1 and FX. PSI is a plastocyanin/cytochrome c6-ferredoxin oxidoreductase, converting photonic excitation into a charge separation, which transfers an electron from the donor P700 chlorophyll pair to the spectroscopically characterized acceptors A0, A1, FX, FA and FB in turn. Oxidized P700 is reduced on the lumenal side of the thylakoid membrane by plastocyanin or cytochrome c6. In Trichormus variabilis (strain ATCC 29413 / PCC 7937) (Anabaena variabilis), this protein is Photosystem I P700 chlorophyll a apoprotein A2 1.